A 497-amino-acid polypeptide reads, in one-letter code: Lysine--tRNA ligase (497 aa).

Residues Glu409 and Glu416 each contribute to the Mg(2+) site.

The protein belongs to the class-II aminoacyl-tRNA synthetase family. Homodimer. It depends on Mg(2+) as a cofactor.

Its subcellular location is the cytoplasm. It carries out the reaction tRNA(Lys) + L-lysine + ATP = L-lysyl-tRNA(Lys) + AMP + diphosphate. The sequence is that of Lysine--tRNA ligase from Streptococcus pyogenes serotype M6 (strain ATCC BAA-946 / MGAS10394).